The primary structure comprises 168 residues: Crossover junction endodeoxyribonuclease RuvC (168 aa).

Catalysis depends on residues aspartate 10, glutamate 70, and aspartate 143. Residues aspartate 10, glutamate 70, and aspartate 143 each contribute to the Mg(2+) site.

It belongs to the RuvC family. As to quaternary structure, homodimer which binds Holliday junction (HJ) DNA. The HJ becomes 2-fold symmetrical on binding to RuvC with unstacked arms; it has a different conformation from HJ DNA in complex with RuvA. In the full resolvosome a probable DNA-RuvA(4)-RuvB(12)-RuvC(2) complex forms which resolves the HJ. The cofactor is Mg(2+).

It localises to the cytoplasm. It catalyses the reaction Endonucleolytic cleavage at a junction such as a reciprocal single-stranded crossover between two homologous DNA duplexes (Holliday junction).. Functionally, the RuvA-RuvB-RuvC complex processes Holliday junction (HJ) DNA during genetic recombination and DNA repair. Endonuclease that resolves HJ intermediates. Cleaves cruciform DNA by making single-stranded nicks across the HJ at symmetrical positions within the homologous arms, yielding a 5'-phosphate and a 3'-hydroxyl group; requires a central core of homology in the junction. The consensus cleavage sequence is 5'-(A/T)TT(C/G)-3'. Cleavage occurs on the 3'-side of the TT dinucleotide at the point of strand exchange. HJ branch migration catalyzed by RuvA-RuvB allows RuvC to scan DNA until it finds its consensus sequence, where it cleaves and resolves the cruciform DNA. The chain is Crossover junction endodeoxyribonuclease RuvC from Roseiflexus sp. (strain RS-1).